The chain runs to 566 residues: Probable cytochrome P450 519D1 (566 aa).

A helical transmembrane segment spans residues 1–21 (MNVFVLTFFICIIYLLFDLIK). Residues 471–491 (FNNNNNNNNNNNNNNSNNKHK) form a disordered region. Residues 472–487 (NNNNNNNNNNNNNNSN) are compositionally biased toward low complexity. Residue Cys-510 coordinates heme.

It belongs to the cytochrome P450 family. It depends on heme as a cofactor.

It is found in the membrane. In Dictyostelium discoideum (Social amoeba), this protein is Probable cytochrome P450 519D1 (cyp519D1).